We begin with the raw amino-acid sequence, 533 residues long: Basal body-orientation factor 1 (533 aa).

Positions 1-30 (MPAKDKRKDKRKDKRKGKNKGKEPKKIIKS) are disordered. The segment covering 7–19 (RKDKRKDKRKGKN) has biased composition (basic residues). Over residues 20–30 (KGKEPKKIIKS) the composition is skewed to basic and acidic residues. Coiled-coil stretches lie at residues 34–207 (AIER…EAEK) and 246–368 (LKEA…VEQF). The segment at 277 to 533 (VKEKIMQLTQ…PQGLQDSDIA (257 aa)) is interaction with MNS1 and ODF2. A compositionally biased stretch (polar residues) spans 507–517 (QQAPVSDSNRM). The tract at residues 507–533 (QQAPVSDSNRMVSPDVIPQGLQDSDIA) is disordered.

It belongs to the BBOF1 family. Interacts with MNS1 and ODF2. Expressed exclusively in the testis and predominantly expressed in male germ cells.

It localises to the cytoplasm. It is found in the cytoskeleton. Its subcellular location is the cilium basal body. The protein resides in the flagellum axoneme. In terms of biological role, plays an essential role in sperm motility and male fertility by stabilizing the sperm flagellar axonemal structure. May be required for the stability of ODF2 and MANS1 proteins. Dispensable for the assembly and function of motile cilia. The polypeptide is Basal body-orientation factor 1 (Mus musculus (Mouse)).